Here is a 73-residue protein sequence, read N- to C-terminus: MPKKEGVIEIEGTVVEALPNAMFRVELSNGHKVLAHISGKMRQHYIRILPEDRVVVELSPYDLTRGRIVYRYK.

Positions 1-73 constitute an S1-like domain; it reads MPKKEGVIEI…TRGRIVYRYK (73 aa).

Belongs to the IF-1 family. In terms of assembly, component of the 30S ribosomal translation pre-initiation complex which assembles on the 30S ribosome in the order IF-2 and IF-3, IF-1 and N-formylmethionyl-tRNA(fMet); mRNA recruitment can occur at any time during PIC assembly.

The protein resides in the cytoplasm. Its function is as follows. One of the essential components for the initiation of protein synthesis. Stabilizes the binding of IF-2 and IF-3 on the 30S subunit to which N-formylmethionyl-tRNA(fMet) subsequently binds. Helps modulate mRNA selection, yielding the 30S pre-initiation complex (PIC). Upon addition of the 50S ribosomal subunit IF-1, IF-2 and IF-3 are released leaving the mature 70S translation initiation complex. The protein is Translation initiation factor IF-1 of Nocardioides sp. (strain ATCC BAA-499 / JS614).